Here is a 556-residue protein sequence, read N- to C-terminus: MSPFLKFFLFLYDYLSPSSFFLVQRNTLGASLDTTDGVVRSGIIGEIIYIWKQTRIFVFIPILKCLVTICLVMSLLLFIERVYMSIVVVFVKLLRRTPEKVHKWEPINDDDLELANTNYPMVLIQIPMYNEKEVCQLSIGAACRLSWPLDRMIVQVLDDSTDPASKELVNAECDKWARKGINIMSEIRDNRIGYKAGALKAGMMHNYVKQCEFVAIFDADFQPDPDFLERTIPFLIHNHEISLVQCRWKFVNANECLMTRMQEMSLNYHFVAEQESGSSIHAFFGFNGTAGVWRIAALNEAGGWKDRTTVEDMDLAVRACLHGWKFVYVHDVEVKNELPSTFKAYRFQQHRWSCGPANLWRKMTMEILQNKKVSAWKKLYLIYNFFFIRKIVVHIFTFVFYCLILPTTVLFPELQVPKWATVYFPTTITILNAIATPRSLHLLVFWILFENVMSMHRTKATFIGLLEAGRVNEWVVTEKLGDTLKSKLIGKATTKLYTRFGQRLNWRELVVGLYIFFCGCYDFAYGGSYFYVYLFLQSCAFFVAGVGYIGTFVPTV.

A helical membrane pass occupies residues isoleucine 56–leucine 76. The active site involves aspartate 159. Positions 218 and 220 each coordinate substrate. Residue aspartate 312 is part of the active site. The next 4 helical transmembrane spans lie at isoleucine 391 to phenylalanine 411, isoleucine 428 to leucine 448, leucine 509 to tyrosine 529, and phenylalanine 530 to glycine 550.

The protein belongs to the glycosyltransferase 2 family. Plant cellulose synthase-like A subfamily.

It localises to the golgi apparatus membrane. It carries out the reaction GDP-mannose + (glucomannan)n = GDP + (glucomannan)n+1.. Probable mannan synthase which consists of a 4-beta-mannosyltransferase activity on mannan using GDP-mannose. The beta-1,4-mannan product is the backbone for galactomannan synthesis by galactomannan galactosyltransferase. Galactomannan is a noncellulosic polysaccharides of plant cell wall. The polypeptide is Probable glucomannan 4-beta-mannosyltransferase 3 (Arabidopsis thaliana (Mouse-ear cress)).